A 705-amino-acid polypeptide reads, in one-letter code: DNA polymerase alpha subunit B (705 aa).

A disordered region spans residues 115 to 199; sequence KKRKLHGPFS…TPTTSRQNVP (85 aa). Positions 125-134 are enriched in polar residues; sequence LSDSKQTYNV. Residue S126 is modified to Phosphoserine. The segment covering 181-197 has biased composition (low complexity); sequence STFQTPTTNTPTTSRQN.

Belongs to the DNA polymerase alpha subunit B family. DNA polymerase alpha:primase is a four subunit enzyme complex, which is assembled throughout the cell cycle, and consists of the two DNA polymerase subunits A POL1 and B POL12, and the DNA primase large PRI2 and small PRI1 subunits. Subunit B POL12 binds to subunit A POL1. In terms of processing, phosphorylated in a cell cycle-dependent manner.

The protein resides in the nucleus. Functionally, non-catalytic component of DNA polymerase alpha, which in a complex with DNA primase (DNA polymerase alpha:primase) constitutes a replicative polymerase. POL12 may play an essential role at the early stage of chromosomal DNA replication by coupling DNA polymerase alpha to the cellular replication machinery. Interacts with MCM10. This is DNA polymerase alpha subunit B (POL12) from Saccharomyces cerevisiae (strain ATCC 204508 / S288c) (Baker's yeast).